The sequence spans 230 residues: Orotidine 5'-phosphate decarboxylase (230 aa).

Substrate contacts are provided by residues Asp10, Lys32, 59-68 (DLKFHDIPRT), Thr116, Arg177, Gln186, Gly206, and Arg207. Lys61 (proton donor) is an active-site residue.

Belongs to the OMP decarboxylase family. Type 1 subfamily. Homodimer.

The catalysed reaction is orotidine 5'-phosphate + H(+) = UMP + CO2. Its pathway is pyrimidine metabolism; UMP biosynthesis via de novo pathway; UMP from orotate: step 2/2. Its function is as follows. Catalyzes the decarboxylation of orotidine 5'-monophosphate (OMP) to uridine 5'-monophosphate (UMP). This is Orotidine 5'-phosphate decarboxylase from Methylacidiphilum infernorum (isolate V4) (Methylokorus infernorum (strain V4)).